Here is a 334-residue protein sequence, read N- to C-terminus: G-protein coupled receptor 12 (334 aa).

At 1 to 48 the chain is on the extracellular side; it reads MNEDPKVNLSGLPRDCIDAGAPENISAAVPSQGSVAESEPELVVNPWD. N-linked (GlcNAc...) asparagine glycosylation is found at N8 and N24. A helical membrane pass occupies residues 49–69; sequence IVLCSSGTLICCENAVVVLII. Residues 70 to 78 are Cytoplasmic-facing; that stretch reads FHSPSLRAP. Residues 79–99 traverse the membrane as a helical segment; the sequence is MFLLIGSLALADLLAGLGLII. Residues 100–113 are Extracellular-facing; the sequence is NFVFAYLLQSEATK. Residues 114–134 traverse the membrane as a helical segment; the sequence is LVTIGLIVASFSASVCSLLAI. Residues 135–158 are Cytoplasmic-facing; it reads TVDRYLSLYYALTYHSERTVTFTY. A helical transmembrane segment spans residues 159–179; the sequence is VMLVMLWGTSICLGLLPVMGW. Residues 180-199 lie on the Extracellular side of the membrane; the sequence is NCLRDESTCSVVRPLTKNNA. The chain crosses the membrane as a helical span at residues 200 to 220; sequence AILSISFLFMFALMLQLYIQI. At 221–252 the chain is on the cytoplasmic side; sequence CKIVMRHAHQIALQHHFLATSHYVTTRKGVST. Residues 253–273 traverse the membrane as a helical segment; the sequence is LALILGTFAACWMPFTLYSLI. The Extracellular portion of the chain corresponds to 274-282; the sequence is ADYTYPSIY. The chain crosses the membrane as a helical span at residues 283 to 303; the sequence is TYATLLPATYNSIINPVIYAF. At 304–334 the chain is on the cytoplasmic side; sequence RNQEIQKALCLICCGCIPSSLSQRARSPSDV. C317 carries the S-palmitoyl cysteine lipid modification. 2 positions are modified to phosphoserine: S330 and S332.

It belongs to the G-protein coupled receptor 1 family. In terms of tissue distribution, expressed predominantly in the forebrain and a lesser extent in the hindbrain. Lower expression in the liver.

The protein localises to the cell membrane. Receptor with constitutive G(s) signaling activity that stimulates cyclic AMP production. Promotes neurite outgrowth and blocks myelin inhibition in neurons. The protein is G-protein coupled receptor 12 (Gpr12) of Mus musculus (Mouse).